A 540-amino-acid chain; its full sequence is Eukaryotic translation initiation factor 3 subunit L (540 aa).

The PCI domain maps to 307–515; it reads TFSDILLYIQ…IHIADTKVSH (209 aa).

It belongs to the eIF-3 subunit L family. As to quaternary structure, component of the eukaryotic translation initiation factor 3 (eIF-3) complex. The eIF-3 complex interacts with pix.

Its subcellular location is the cytoplasm. Its function is as follows. Component of the eukaryotic translation initiation factor 3 (eIF-3) complex, which is involved in protein synthesis of a specialized repertoire of mRNAs and, together with other initiation factors, stimulates binding of mRNA and methionyl-tRNAi to the 40S ribosome. The eIF-3 complex specifically targets and initiates translation of a subset of mRNAs involved in cell proliferation. The chain is Eukaryotic translation initiation factor 3 subunit L from Drosophila grimshawi (Hawaiian fruit fly).